We begin with the raw amino-acid sequence, 192 residues long: C-X-C chemokine receptor type 4 (192 aa).

Y1 is modified (sulfotyrosine). Residues 1–11 (YTEDDLGSGDY) form an important for chemokine binding and signaling region. Residues 1–28 (YTEDDLGSGDYDSMKEPCFREENAHFNR) lie on the Extracellular side of the membrane. S8 carries O-linked (Xyl...) (chondroitin sulfate) serine glycosylation. The residue at position 11 (Y11) is a Sulfotyrosine. A helical transmembrane segment spans residues 29-53 (IFLPTVYSIIFLTGIVGNGLVILVM). Over 54-67 (GYQKKLRSMTDKYR) the chain is Cytoplasmic. A helical membrane pass occupies residues 68 to 89 (LHLSVADLLFVLTLPFWAVDAV). The segment at 84–87 (WAVD) is chemokine binding. Residues 90-100 (ANWYFGQFLCK) are Extracellular-facing. C99 and C176 form a disulfide bridge. A helical membrane pass occupies residues 101–120 (AVHVIYTVNLYSSVLILAFI). The tract at residues 103 to 107 (HVIYT) is chemokine binding. Topologically, residues 121 to 144 (SLDRYLAIVHATNSQRPRKLLAEK) are cytoplasmic. An Important for signaling motif is present at residues 123–125 (DRY). Positions 125–137 (YLAIVHATNSQRP) are involved in dimerization; when bound to chemokine. A helical transmembrane segment spans residues 145–164 (VVYVGVWLPAVLLTIPDLIF). Residues 165–185 (ADIKEADERYICDRFYPSDLW) lie on the Extracellular side of the membrane. A chemokine binding, important for signaling region spans residues 176–180 (CDRFY). The helical transmembrane segment at 186-192 (LVVFQFQ) threads the bilayer.

Belongs to the G-protein coupled receptor 1 family. Monomer. Can form homodimers. Interacts with CD164. Interacts with ARRB2; the interaction is dependent on the C-terminal phosphorylation of CXCR4 and allows activation of MAPK1 and MAPK3. Interacts with ARR3; the interaction is dependent on the C-terminal phosphorylation of CXCR4 and modulates calcium mobilization. Interacts with RNF113A; the interaction, enhanced by CXCL12, promotes CXCR4 ubiquitination and subsequent degradation. Interacts (via the cytoplasmic C-terminal) with ITCH (via the WW domains I and II); the interaction, enhanced by CXCL12, promotes CXCR4 ubiquitination and leads to its degradation. Interacts with extracellular ubiquitin. Interacts with DBN1; this interaction is enhanced by antigenic stimulation. Following LPS binding, may form a complex with GDF5, HSP90AA1 and HSPA8. Phosphorylated on agonist stimulation. Rapidly phosphorylated on serine and threonine residues in the C-terminal. Post-translationally, ubiquitinated after ligand binding, leading to its degradation. Ubiquitinated by ITCH at the cell membrane on agonist stimulation. The ubiquitin-dependent mechanism, endosomal sorting complex required for transport (ESCRT), then targets CXCR4 for lysosomal degradation. This process is dependent also on prior Ser-/Thr-phosphorylation in the C-terminal of CXCR4. Also binding of ARRB1 to STAM negatively regulates CXCR4 sorting to lysosomes though modulating ubiquitination of SFR5S. In terms of processing, sulfation is required for efficient binding of CXCL12/SDF-1alpha and promotes its dimerization. O- and N-glycosylated. N-glycosylation can mask coreceptor function. The O-glycosylation chondroitin sulfate attachment does not affect interaction with CXCL12/SDF-1alpha nor its coreceptor activity.

It is found in the cell membrane. The protein resides in the cell junction. Its subcellular location is the early endosome. The protein localises to the late endosome. It localises to the lysosome. Its function is as follows. Receptor for the C-X-C chemokine CXCL12/SDF-1 that transduces a signal by increasing intracellular calcium ion levels and enhancing MAPK1/MAPK3 activation. Involved in the AKT signaling cascade. Plays a role in regulation of cell migration, e.g. during wound healing. Acts as a receptor for extracellular ubiquitin; leading to enhanced intracellular calcium ions and reduced cellular cAMP levels. Binds bacterial lipopolysaccharide (LPS) et mediates LPS-induced inflammatory response, including TNF secretion by monocytes. Involved in hematopoiesis and in cardiac ventricular septum formation. Also plays an essential role in vascularization of the gastrointestinal tract, probably by regulating vascular branching and/or remodeling processes in endothelial cells. Involved in cerebellar development. In the CNS, could mediate hippocampal-neuron survival. In Ovis aries (Sheep), this protein is C-X-C chemokine receptor type 4 (CXCR4).